Reading from the N-terminus, the 1205-residue chain is Transcriptional-regulating factor 1 (1205 aa).

6 disordered regions span residues 201-226 (YQQV…VGQH), 270-317 (YPQP…QRQS), 332-351 (QHLQ…SYHR), 390-500 (PQSH…QTKG), 527-583 (LNGH…PEAE), and 601-629 (PKPS…MSDD). 2 stretches are compositionally biased toward low complexity: residues 291–317 (QQQQ…QRQS) and 332–342 (QHLQEQQQPSM). Polar residues-rich tracts occupy residues 406–417 (KTYSSDRQTPAM), 437–447 (SEMTRVTSTLP), and 487–498 (QSGSPESSSGQT). S490 is modified (phosphoserine). The segment at 512–534 (LTCSICLKEFKSLPALNGHMRSH) adopts a C2H2-type 1 zinc-finger fold. The span at 551–579 (APPPQPQPQPQPQQPLPPPPPPPPPPQLP) shows a compositional bias: pro residues. Residues 604 to 613 (SSQGFTNSVA) are compositionally biased toward polar residues. Residues K639 and K646 each carry the N6-acetyllysine modification. Phosphothreonine is present on T773. The ELM2 domain occupies 785–876 (PRINIGLRFQ…ATLEMLLLRK (92 aa)). The SANT domain maps to 891-942 (AGSDKWTSLERKLFNKALATYSKDFIFVQKMVKSKTVAQCVEYYYTWKKIMR). Positions 956-975 (DDCMTSEEEEEAEEEEEDPE) are enriched in acidic residues. Disordered stretches follow at residues 956–1016 (DDCM…QQPS) and 1043–1087 (HGGT…GETD). A Phosphothreonine modification is found at T960. S961 is subject to Phosphoserine. Over residues 976-990 (EDRKSIKEEESEVAK) the composition is skewed to basic and acidic residues. The C2H2-type 2 zinc finger occupies 1019-1043 (FICEMPNCGAVFSSRQALNGHARIH). A compositionally biased stretch (low complexity) spans 1072–1086 (SVKSSPSHSTTSGET). The C2H2-type 3 zinc-finger motif lies at 1092 to 1114 (FPCKECGKVFFKIKSRNAHMKTH).

In terms of assembly, interacts with CREBBP and EP300. Interacts with DNTTIP1 and DNTT. As to expression, highly expressed in kidney, lung and brain. In the brain, expression was seen in the basal ganglia, hippocampus, piriform cortex, cerebral cortex, ventromedial nucleus of the hypothalamus and the dorsal and superior central nuclei of the raphe.

Its subcellular location is the nucleus. Functionally, binds DNA and activates transcription of CYP11A1. Interaction with CREBBP and EP300 results in a synergistic transcriptional activation of CYP11A1. The chain is Transcriptional-regulating factor 1 (Trerf1) from Mus musculus (Mouse).